The chain runs to 143 residues: S-adenosylmethionine decarboxylase proenzyme (143 aa).

Catalysis depends on serine 66, which acts as the Schiff-base intermediate with substrate; via pyruvic acid. A Pyruvic acid (Ser); by autocatalysis modification is found at serine 66. Catalysis depends on histidine 71, which acts as the Proton acceptor; for processing activity. Cysteine 86 (proton donor; for catalytic activity) is an active-site residue.

Belongs to the prokaryotic AdoMetDC family. Type 1 subfamily. Heterotetramer of two alpha and two beta chains arranged as a dimer of alpha/beta heterodimers. The cofactor is pyruvate. Post-translationally, is synthesized initially as an inactive proenzyme. Formation of the active enzyme involves a self-maturation process in which the active site pyruvoyl group is generated from an internal serine residue via an autocatalytic post-translational modification. Two non-identical subunits are generated from the proenzyme in this reaction, and the pyruvate is formed at the N-terminus of the alpha chain, which is derived from the carboxyl end of the proenzyme. The post-translation cleavage follows an unusual pathway, termed non-hydrolytic serinolysis, in which the side chain hydroxyl group of the serine supplies its oxygen atom to form the C-terminus of the beta chain, while the remainder of the serine residue undergoes an oxidative deamination to produce ammonia and the pyruvoyl group blocking the N-terminus of the alpha chain.

It carries out the reaction S-adenosyl-L-methionine + H(+) = S-adenosyl 3-(methylsulfanyl)propylamine + CO2. Its pathway is amine and polyamine biosynthesis; S-adenosylmethioninamine biosynthesis; S-adenosylmethioninamine from S-adenosyl-L-methionine: step 1/1. Its function is as follows. Catalyzes the decarboxylation of S-adenosylmethionine to S-adenosylmethioninamine (dcAdoMet), the propylamine donor required for the synthesis of the polyamines spermine and spermidine from the diamine putrescine. The polypeptide is S-adenosylmethionine decarboxylase proenzyme (Thermococcus kodakarensis (strain ATCC BAA-918 / JCM 12380 / KOD1) (Pyrococcus kodakaraensis (strain KOD1))).